Here is a 279-residue protein sequence, read N- to C-terminus: MRSGVIAKKVGMTRLFMEDGKQVPVTVLQLDKLQVVAQRTAEKDGYSAVQLGAGTAKAKRTTKAMRGHFAAASVEPKRKVAEFRVAPENLINVGEEITADHYFEGQYVDVSGTSIGKGFAGAMKRHNFGGLRASHGVSISHRSHGSTGQCQDPGKVFKGKKMAGHMGAARVTTQNLQVVRTDADRGLIMIKGAVPGSKGGWVTIKDAVKKPVPENVILPAALKSAAEEAKRLAEEAAAAAEAEAKAAEEAAAAEAAAAEEAALKQAEAQIEAEKKEGDE.

Gln151 carries the post-translational modification N5-methylglutamine.

It belongs to the universal ribosomal protein uL3 family. In terms of assembly, part of the 50S ribosomal subunit. Forms a cluster with proteins L14 and L19. Post-translationally, methylated by PrmB.

Functionally, one of the primary rRNA binding proteins, it binds directly near the 3'-end of the 23S rRNA, where it nucleates assembly of the 50S subunit. The chain is Large ribosomal subunit protein uL3 from Dinoroseobacter shibae (strain DSM 16493 / NCIMB 14021 / DFL 12).